A 251-amino-acid polypeptide reads, in one-letter code: Probable transcriptional regulatory protein cauri_1421 (251 aa).

The disordered stretch occupies residues 1 to 21 (MAGHSKWATTKHKKAANDAKR).

Belongs to the TACO1 family.

The protein localises to the cytoplasm. This chain is Probable transcriptional regulatory protein cauri_1421, found in Corynebacterium aurimucosum (strain ATCC 700975 / DSM 44827 / CIP 107346 / CN-1) (Corynebacterium nigricans).